Consider the following 283-residue polypeptide: MLIIETLPLLRQQIRRLRMEGKRVALVPTMGNLHDGHMKLVDEAKARADVVVVSIFVNPMQFDRPEDLARYPRTLQEDCEKLNKRKVDLVFAPSVKEIYPNGTETHTYVDVPGLSTMLEGASRPGHFRGVSTIVSKLFNLVQPDIACFGEKDFQQLALIRKMVADMGFDIEIVGVPIMRAKDGLALSSRNGYLTAEQRKIAPGLYKVLSSIADKLQAGERDLDEIITIAGQELNEKGFRADDIQIRDADTLLEVSENSKRAVILVAAWLGDARLIDNKIVELV.

An ATP-binding site is contributed by 30-37; it reads MGNLHDGH. The Proton donor role is filled by His-37. (R)-pantoate is bound at residue Gln-61. Position 61 (Gln-61) interacts with beta-alanine. 149 to 152 serves as a coordination point for ATP; sequence GEKD. Gln-155 serves as a coordination point for (R)-pantoate. Position 186-189 (186-189) interacts with ATP; it reads LSSR.

It belongs to the pantothenate synthetase family. As to quaternary structure, homodimer.

It localises to the cytoplasm. The catalysed reaction is (R)-pantoate + beta-alanine + ATP = (R)-pantothenate + AMP + diphosphate + H(+). The protein operates within cofactor biosynthesis; (R)-pantothenate biosynthesis; (R)-pantothenate from (R)-pantoate and beta-alanine: step 1/1. In terms of biological role, catalyzes the condensation of pantoate with beta-alanine in an ATP-dependent reaction via a pantoyl-adenylate intermediate. The chain is Pantothenate synthetase from Escherichia coli O17:K52:H18 (strain UMN026 / ExPEC).